Reading from the N-terminus, the 240-residue chain is Transcriptional activator protein VanR (240 aa).

The 66-residue stretch at 169-234 folds into the HTH luxR-type domain; that stretch reads DAKPRAVLTA…QAITKAILGG (66 aa). The segment at residues 193-212 is a DNA-binding region (H-T-H motif); it reads AWEIATIINTSERTVKFHFS.

This sequence belongs to the autoinducer-regulated transcriptional regulatory protein family.

In terms of biological role, probable transcriptional activator. Binds to autoinducer molecule ODHL. In Vibrio anguillarum (Listonella anguillarum), this protein is Transcriptional activator protein VanR (vanR).